Here is a 424-residue protein sequence, read N- to C-terminus: Trigger factor (424 aa).

The PPIase FKBP-type domain maps to 163–248 (GNTVVLDFEG…IHEIKAKELP (86 aa)).

This sequence belongs to the FKBP-type PPIase family. Tig subfamily.

It is found in the cytoplasm. The catalysed reaction is [protein]-peptidylproline (omega=180) = [protein]-peptidylproline (omega=0). Involved in protein export. Acts as a chaperone by maintaining the newly synthesized protein in an open conformation. Functions as a peptidyl-prolyl cis-trans isomerase. The chain is Trigger factor (tig) from Bacillus subtilis (strain 168).